Here is a 402-residue protein sequence, read N- to C-terminus: B box and SPRY domain-containing protein (402 aa).

The tract at residues 1–20 (MSAEGAEPGPGSGSGPGPGP) is disordered. The B box-type zinc-finger motif lies at 17–65 (GPGPLCPEHGQALSWFCGSERRPVCAACAGLGGRCRGHRIRRAEERAEE). One can recognise a B30.2/SPRY domain in the interval 212–402 (PLLTQLWATA…VADQTISIVR (191 aa)).

Interacts with TRPV5 and TRPV6. Interacts with YWHAZ/14-3-3 protein zeta.

The protein localises to the cytoplasm. The protein resides in the membrane. May regulate epithelial calcium transport by inhibiting TRPV5 activity. This is B box and SPRY domain-containing protein (BSPRY) from Homo sapiens (Human).